A 1060-amino-acid polypeptide reads, in one-letter code: Carbamoyl phosphate synthase large chain (1060 aa).

Positions 1 to 401 (MPKRTDIRKI…SLLKACRSLE (401 aa)) are carboxyphosphate synthetic domain. 12 residues coordinate ATP: arginine 129, arginine 169, glycine 175, glycine 176, arginine 208, isoleucine 210, glutamate 215, glycine 241, isoleucine 242, histidine 243, glutamine 284, and glutamate 298. In terms of domain architecture, ATP-grasp 1 spans 133-327 (KQLMEELNQP…IAKLAAKIAV (195 aa)). The Mg(2+) site is built by glutamine 284, glutamate 298, and asparagine 300. Residues glutamine 284, glutamate 298, and asparagine 300 each contribute to the Mn(2+) site. Residues 402–546 (IGVDHIKIAD…YSTYAVENES (145 aa)) are oligomerization domain. A carbamoyl phosphate synthetic domain region spans residues 547 to 929 (LISDKASILV…ALYKAFEAAY (383 aa)). The 191-residue stretch at 671-861 (EATLQALNIP…MAQVATKVIL (191 aa)) folds into the ATP-grasp 2 domain. 10 residues coordinate ATP: arginine 707, alanine 746, leucine 748, glutamate 752, glycine 777, valine 778, histidine 779, serine 780, glutamine 820, and glutamate 832. The Mg(2+) site is built by glutamine 820, glutamate 832, and asparagine 834. Residues glutamine 820, glutamate 832, and asparagine 834 each coordinate Mn(2+). An MGS-like domain is found at 930–1060 (LHMPDYGNIV…SRAFTLKVLD (131 aa)). The allosteric domain stretch occupies residues 930–1060 (LHMPDYGNIV…SRAFTLKVLD (131 aa)).

This sequence belongs to the CarB family. In terms of assembly, composed of two chains; the small (or glutamine) chain promotes the hydrolysis of glutamine to ammonia, which is used by the large (or ammonia) chain to synthesize carbamoyl phosphate. Tetramer of heterodimers (alpha,beta)4. Requires Mg(2+) as cofactor. The cofactor is Mn(2+).

The enzyme catalyses hydrogencarbonate + L-glutamine + 2 ATP + H2O = carbamoyl phosphate + L-glutamate + 2 ADP + phosphate + 2 H(+). It carries out the reaction hydrogencarbonate + NH4(+) + 2 ATP = carbamoyl phosphate + 2 ADP + phosphate + 2 H(+). It functions in the pathway amino-acid biosynthesis; L-arginine biosynthesis; carbamoyl phosphate from bicarbonate: step 1/1. The protein operates within pyrimidine metabolism; UMP biosynthesis via de novo pathway; (S)-dihydroorotate from bicarbonate: step 1/3. In terms of biological role, large subunit of the glutamine-dependent carbamoyl phosphate synthetase (CPSase). CPSase catalyzes the formation of carbamoyl phosphate from the ammonia moiety of glutamine, carbonate, and phosphate donated by ATP, constituting the first step of 2 biosynthetic pathways, one leading to arginine and/or urea and the other to pyrimidine nucleotides. The large subunit (synthetase) binds the substrates ammonia (free or transferred from glutamine from the small subunit), hydrogencarbonate and ATP and carries out an ATP-coupled ligase reaction, activating hydrogencarbonate by forming carboxy phosphate which reacts with ammonia to form carbamoyl phosphate. The sequence is that of Carbamoyl phosphate synthase large chain from Streptococcus agalactiae serotype III (strain NEM316).